The following is a 422-amino-acid chain: Enolase (422 aa).

Gln-161 is a (2R)-2-phosphoglycerate binding site. Glu-203 functions as the Proton donor in the catalytic mechanism. Asp-240, Glu-283, and Asp-310 together coordinate Mg(2+). Lys-335, Arg-364, Ser-365, and Lys-386 together coordinate (2R)-2-phosphoglycerate. Lys-335 serves as the catalytic Proton acceptor.

The protein belongs to the enolase family. The cofactor is Mg(2+).

It localises to the cytoplasm. The protein resides in the secreted. It is found in the cell surface. It carries out the reaction (2R)-2-phosphoglycerate = phosphoenolpyruvate + H2O. It functions in the pathway carbohydrate degradation; glycolysis; pyruvate from D-glyceraldehyde 3-phosphate: step 4/5. In terms of biological role, catalyzes the reversible conversion of 2-phosphoglycerate (2-PG) into phosphoenolpyruvate (PEP). It is essential for the degradation of carbohydrates via glycolysis. This chain is Enolase, found in Deinococcus deserti (strain DSM 17065 / CIP 109153 / LMG 22923 / VCD115).